Consider the following 98-residue polypeptide: MIPGGLSEAKPATPEIQEIANEVKPQLEEKTNETYQKFEAIEYKTQVVAGINYYIKVQVDDNRYIHIKVFKGLPVQDSSLTLTGYQTGKSEDDELTGF.

Position 1 is an N-acetylmethionine (Met-1). The Secondary area of contact motif lies at 46–50 (QVVAG).

This sequence belongs to the cystatin family.

It localises to the cytoplasm. In terms of biological role, this is an intracellular thiol proteinase inhibitor. In Felis catus (Cat), this protein is Cystatin-A (CSTA).